The primary structure comprises 585 residues: GRR1-like protein 1 (585 aa).

The F-box domain occupies 1 to 48; that stretch reads MGLRFPPKVLEHILSFIDSNEDRNSVSLVCKSWFETERKTRKRVFVGN. 1D-myo-inositol hexakisphosphate is bound at residue Lys70. The segment at 77-78 is interaction with auxin-responsive proteins; that stretch reads DY. Residues 109–110 and Arg340 each bind 1D-myo-inositol hexakisphosphate; that span reads KR. The interaction with auxin-responsive proteins stretch occupies residues 343–348; the sequence is PSEPDL. 397–399 contacts 1D-myo-inositol hexakisphosphate; that stretch reads CFR. The interaction with auxin-responsive proteins stretch occupies residues 401-405; the sequence is CVIEP. Residue Arg432 participates in 1D-myo-inositol hexakisphosphate binding. The segment at 460–461 is interaction with auxin-responsive proteins; the sequence is AF. Residues 480–481 and Arg505 contribute to the 1D-myo-inositol hexakisphosphate site; that span reads KK.

As to quaternary structure, part of a SCF (SKP1-cullin-F-box) protein ligase complex. Interacts with CUL1, SKP1A/ASK1 and SKP1B/ASK2. Interacts with Aux/IAA proteins (IAA7 and IAA12) in an auxin-dependent manner. As to expression, ubiquitous.

It is found in the nucleus. Its pathway is protein modification; protein ubiquitination. In terms of biological role, component of SCF(ASK-cullin-F-box) E3 ubiquitin ligase complexes, which may mediate the ubiquitination and subsequent proteasomal degradation of target proteins. Auxin receptor that mediates Aux/IAA proteins proteasomal degradation and auxin-regulated transcription. Involved in embryogenesis regulation by auxin. Confers sensitivity to the virulent bacterial pathogen P.syringae. Mediates glucose repression in yeast. In Arabidopsis thaliana (Mouse-ear cress), this protein is GRR1-like protein 1 (GRH1).